Consider the following 140-residue polypeptide: Calcitonin (140 aa).

The first 25 residues, 1 to 25 (MGFWKFSPFLPLSILVLYQVGIIQA), serve as a signal peptide directing secretion. A propeptide spanning residues 26-81 (APFRSALESLPDPAVLPEEESRLLLAALVKDYVQMKVRALEQEQETGGASLDSPRA) is cleaved from the precursor. An intrachain disulfide couples Cys-84 to Cys-90. Pro-115 carries the post-translational modification Proline amide. Residues 120–140 (VMARGLERDHGPHIGTSQDAY) constitute a propeptide that is removed on maturation.

It belongs to the calcitonin family.

It is found in the secreted. Calcitonin is a peptide hormone that causes a rapid but short-lived drop in the level of calcium and phosphate in blood by promoting the incorporation of those ions in the bones. Calcitonin function is mediated by the calcitonin receptor/CALCR and the CALCR-RAMP2 (AMYR2) receptor complex. This Equus caballus (Horse) protein is Calcitonin (CALCA).